The primary structure comprises 249 residues: Segregation and condensation protein A (249 aa).

It belongs to the ScpA family. As to quaternary structure, component of a cohesin-like complex composed of ScpA, ScpB and the Smc homodimer, in which ScpA and ScpB bind to the head domain of Smc. The presence of the three proteins is required for the association of the complex with DNA.

The protein resides in the cytoplasm. In terms of biological role, participates in chromosomal partition during cell division. May act via the formation of a condensin-like complex containing Smc and ScpB that pull DNA away from mid-cell into both cell halves. In Listeria welshimeri serovar 6b (strain ATCC 35897 / DSM 20650 / CCUG 15529 / CIP 8149 / NCTC 11857 / SLCC 5334 / V8), this protein is Segregation and condensation protein A.